A 1220-amino-acid polypeptide reads, in one-letter code: Osmosensing histidine protein kinase SLN1 (1220 aa).

Topologically, residues 1–22 (MRFGLPSKLELTPPFRIGIRTQ) are cytoplasmic. Residues 23 to 46 (LTALVSIVALGSLIILAVTTGVYF) traverse the membrane as a helical segment. Over 47–333 (TSNYKNLRSD…FLSPATKLAK (287 aa)) the chain is Extracellular. 6 N-linked (GlcNAc...) asparagine glycosylation sites follow: N100, N138, N142, N181, N224, and N272. Residues 334–354 (IITGTVIAIGVFVILLTLPLA) form a helical membrane-spanning segment. The Cytoplasmic segment spans residues 355–1220 (HWAVQPIVRL…AAYQGKKNNK (866 aa)). Disordered regions lie at residues 414–433 (GSTT…GAAF) and 444–500 (NLGN…HILT). The segment covering 451–468 (SPPEEENKIPNNHTDAKI) has biased composition (basic and acidic residues). The residue at position 502 (S502) is a Phosphoserine. One can recognise a Histidine kinase domain in the interval 573–928 (NISHELRTPL…KFTFTLPLNQ (356 aa)). H576 is modified (phosphohistidine; by autocatalysis). 2 positions are modified to phosphoserine: S758 and S833. 2 disordered regions span residues 960–1016 (AKSI…DNGG) and 1040–1081 (NSLS…VKDD). Residues 965 to 984 (SRQSTSSVATPATNRSSLTN) are compositionally biased toward polar residues. Positions 988–1000 (PEVRSKGKHETKD) are enriched in basic and acidic residues. Residues S1041 and S1044 each carry the phosphoserine modification. Residues 1063–1075 (LQSTGTATSSRNI) show a composition bias toward polar residues. The region spanning 1089 to 1210 (KILVVEDNHV…KLKTILTEFC (122 aa)) is the Response regulatory domain. Residues E1094, D1095, D1144, and K1195 each contribute to the Mg(2+) site. D1144 is subject to 4-aspartylphosphate.

As to quaternary structure, interacts with DJP1, MOG1 and YPD1. The phosphorelay mechanism involves the sequential transfer of a phosphate group from His-576 (H1) in the histidine kinase domain (transmitter domain) to Asp-1144 (D1) of the response regulatory domain (receiver domain). This transfer probably occurs between two SLN1 molecules, rather than intramolecularly. The phosphate group is further transferred to 'His-64' (H2) of YPD1 and finally to 'Asp-554' (D2) of SSK1 or 'Asp-427' (D2) of SKN7.

The protein resides in the cell membrane. It catalyses the reaction ATP + protein L-histidine = ADP + protein N-phospho-L-histidine.. Functionally, histidine kinase that acts as an osmosensor at the plasma membrane. Part of the bifurcated SLN1-YPD1-SKN7/SSK1 two-component regulatory system, which controls activity of the HOG1 pathway and gene expression in response to changes in the osmolarity of the extracellular environment. Under normal osmotic conditions, the histidine kinase autophosphorylates His-576. This phosphate is subsequently transferred to Asp-1144, from where it is relayed to 'His-64' of the phosphorelay intermediate protein YPD1. Under high osmolarity conditions, the histidine kinase is no longer active. This Saccharomyces cerevisiae (strain ATCC 204508 / S288c) (Baker's yeast) protein is Osmosensing histidine protein kinase SLN1 (SLN1).